Consider the following 288-residue polypeptide: Ras-like protein 1 (288 aa).

11–18 (GGGGVGKS) contributes to the GTP binding site. The Effector region signature appears at 33–41 (YDPTIEDSY). Residues 58-62 (DTAGQ) and 117-120 (NKCD) contribute to the GTP site. Positions 176–288 (EKQQQQQQQQ…KSKNGCCVIV (113 aa)) are disordered. Composition is skewed to low complexity over residues 178-216 (QQQQQQQQQNANQQGQDQYGQQKDNQQSQFNNQINNNNN) and 246-281 (PNQSQSQRQQQQQQQEPQQQSENQFSGQKQSSSKSK). The S-palmitoyl cysteine moiety is linked to residue cysteine 284. A Cysteine methyl ester modification is found at cysteine 285. Residue cysteine 285 is the site of S-farnesyl cysteine attachment. A propeptide spans 286–288 (VIV) (removed in mature form).

The protein belongs to the small GTPase superfamily. Ras family.

It localises to the cell membrane. The enzyme catalyses GTP + H2O = GDP + phosphate + H(+). Its activity is regulated as follows. Alternates between an inactive form bound to GDP and an active form bound to GTP. Activated by a guanine nucleotide-exchange factor (GEF) and inactivated by a GTPase-activating protein (GAP). In terms of biological role, required for the regulation of both a MAP kinase signaling pathway and a cAMP signaling pathway. The activation of these pathways contributes to the pathogenicity of the cells through the induction of the morphological transition from the yeast to the polarized filamentous form. The chain is Ras-like protein 1 (RAS1) from Candida albicans (strain WO-1) (Yeast).